A 177-amino-acid polypeptide reads, in one-letter code: MASSMMASTAAAVARAGPAQTNMVPFNACRSSVPFPATRKANNDLSTLPSNGGRVSCMQVWPPEGLKKFETLSYLPPLSVEDLAKEVDYLLRNDWVPCIEFSKEGFVYRENHASPGYYDGRYWTMWKLPMFGCTDASQVIAEVEEAKKAYPEYFVRIIGFDNKRQVQCISFIAYKPT.

A chloroplast-targeting transit peptide spans 1-56 (MASSMMASTAAAVARAGPAQTNMVPFNACRSSVPFPATRKANNDLSTLPSNGGRVS).

Belongs to the RuBisCO small chain family. In terms of assembly, heterohexadecamer of 8 large and 8 small subunits.

The protein localises to the plastid. It localises to the chloroplast. In terms of biological role, ruBisCO catalyzes two reactions: the carboxylation of D-ribulose 1,5-bisphosphate, the primary event in carbon dioxide fixation, as well as the oxidative fragmentation of the pentose substrate. Both reactions occur simultaneously and in competition at the same active site. Although the small subunit is not catalytic it is essential for maximal activity. The protein is Ribulose bisphosphate carboxylase small subunit, chloroplastic 4 of Lemna gibba (Swollen duckweed).